The following is a 224-amino-acid chain: MKPDVKICGLKTEEAVEKAVSLGATHVGFIFFEKSPRHIEPDIAGRIAEKARGRAKIVAVTVDADTDDLDDIVYLLKPDILQLHGHESPQQVLTIKALYGLPVMKVFSIREPADLLQIDAYIGIADRFLLDAKAPEGSDLPGGNGVTFDWRLLRDLDAEVDYMLSGGLNKDNVGQALAETAARGLDVSSGVESAPGVKDLERMDQFFAAVRLATATAPVSGSVQ.

The protein belongs to the TrpF family.

It carries out the reaction N-(5-phospho-beta-D-ribosyl)anthranilate = 1-(2-carboxyphenylamino)-1-deoxy-D-ribulose 5-phosphate. Its pathway is amino-acid biosynthesis; L-tryptophan biosynthesis; L-tryptophan from chorismate: step 3/5. The polypeptide is N-(5'-phosphoribosyl)anthranilate isomerase (Allorhizobium ampelinum (strain ATCC BAA-846 / DSM 112012 / S4) (Agrobacterium vitis (strain S4))).